We begin with the raw amino-acid sequence, 361 residues long: Molybdenum import ATP-binding protein ModC (361 aa).

The ABC transporter domain occupies 1 to 228; it reads MLNINIEKQL…EQMRPWVPLQ (228 aa). 31 to 38 lines the ATP pocket; that stretch reads GRSGAGKT. Residues 289-356 form the Mop domain; the sequence is GSSVRNLLRG…IKGVTMTQMD (68 aa).

It belongs to the ABC transporter superfamily. Molybdate importer (TC 3.A.1.8) family. In terms of assembly, the complex is composed of two ATP-binding proteins (ModC), two transmembrane proteins (ModB) and a solute-binding protein (ModA).

It localises to the cell inner membrane. The catalysed reaction is molybdate(out) + ATP + H2O = molybdate(in) + ADP + phosphate + H(+). Functionally, part of the ABC transporter complex ModABC involved in molybdenum import. Responsible for energy coupling to the transport system. This Shewanella sp. (strain MR-7) protein is Molybdenum import ATP-binding protein ModC.